A 510-amino-acid polypeptide reads, in one-letter code: Beta-glucosidase 26 (510 aa).

The signal sequence occupies residues 1 to 27 (MRKFIAALRLALAAAAHLLLTLPPAQC). Gln-59 lines the a beta-D-glucoside pocket. N-linked (GlcNAc...) asparagine glycans are attached at residues Asn-87 and Asn-127. Residues His-160 and 205 to 206 (NE) each bind a beta-D-glucoside. The Proton donor role is filled by Glu-206. Cys-225 and Cys-228 are oxidised to a cystine. Asn-233 carries N-linked (GlcNAc...) asparagine glycosylation. A beta-D-glucoside is bound by residues Tyr-345 and Glu-416. Catalysis depends on Glu-416, which acts as the Nucleophile. N-linked (GlcNAc...) asparagine glycosylation is present at Asn-424. Residues Trp-463, 470-471 (EW), and Phe-479 contribute to the a beta-D-glucoside site.

The protein belongs to the glycosyl hydrolase 1 family.

The catalysed reaction is Hydrolysis of terminal, non-reducing beta-D-glucosyl residues with release of beta-D-glucose.. Functionally, hydrolyzes p-nitrophenyl beta-D-glucoside, p-nitrophenyl beta-D-mannoside, p-nitrophenyl beta-D-galactoside, p-nitrophenyl beta-D-xyloside, p-nitrophenyl beta-D-fucoside, p-nitrophenyl beta-L-arabinoside, cello-oligosaccharides, laminari-oligosaccharides and sophorose. In Oryza sativa subsp. japonica (Rice), this protein is Beta-glucosidase 26 (BGLU26).